A 668-amino-acid chain; its full sequence is SH2 domain-containing protein B (668 aa).

A disordered region spans residues 373-411 (SVSGSEESYQQCNSHPQTSRQFENGNGMRLHEEDNSSID). Residues 374-396 (VSGSEESYQQCNSHPQTSRQFEN) show a composition bias toward polar residues. Residues 574–642 (WIEGFITKEE…DNICESSERY (69 aa)) form the SH2 domain.

Post-translationally, phosphorylated on tyrosine residues. As to expression, expressed in roots, leaves, stems and flowers.

This chain is SH2 domain-containing protein B, found in Arabidopsis thaliana (Mouse-ear cress).